The sequence spans 279 residues: NADPH-dependent 7-cyano-7-deazaguanine reductase (279 aa).

Substrate is bound at residue 86-88; it reads IES. An NADPH-binding site is contributed by 88–89; the sequence is SK. The active-site Thioimide intermediate is C187. The Proton donor role is filled by D194. 226–227 contributes to the substrate binding site; the sequence is HE. Position 255–256 (255–256) interacts with NADPH; sequence RG.

It belongs to the GTP cyclohydrolase I family. QueF type 2 subfamily. Homodimer.

The protein resides in the cytoplasm. The catalysed reaction is 7-aminomethyl-7-carbaguanine + 2 NADP(+) = 7-cyano-7-deazaguanine + 2 NADPH + 3 H(+). Its pathway is tRNA modification; tRNA-queuosine biosynthesis. Catalyzes the NADPH-dependent reduction of 7-cyano-7-deazaguanine (preQ0) to 7-aminomethyl-7-deazaguanine (preQ1). The sequence is that of NADPH-dependent 7-cyano-7-deazaguanine reductase from Haemophilus influenzae (strain PittEE).